Consider the following 437-residue polypeptide: UDP-N-acetylmuramoylalanine--D-glutamate ligase (437 aa).

ATP is bound at residue 112-118; sequence GSNGKST.

It belongs to the MurCDEF family.

Its subcellular location is the cytoplasm. The catalysed reaction is UDP-N-acetyl-alpha-D-muramoyl-L-alanine + D-glutamate + ATP = UDP-N-acetyl-alpha-D-muramoyl-L-alanyl-D-glutamate + ADP + phosphate + H(+). It functions in the pathway cell wall biogenesis; peptidoglycan biosynthesis. Functionally, cell wall formation. Catalyzes the addition of glutamate to the nucleotide precursor UDP-N-acetylmuramoyl-L-alanine (UMA). The chain is UDP-N-acetylmuramoylalanine--D-glutamate ligase from Haemophilus influenzae (strain PittEE).